The chain runs to 437 residues: Glucose-1-phosphate adenylyltransferase (437 aa).

Residues tyrosine 113, glycine 179, 194-195, and serine 212 each bind alpha-D-glucose 1-phosphate; that span reads EK.

It belongs to the bacterial/plant glucose-1-phosphate adenylyltransferase family. In terms of assembly, homotetramer.

It catalyses the reaction alpha-D-glucose 1-phosphate + ATP + H(+) = ADP-alpha-D-glucose + diphosphate. The protein operates within glycan biosynthesis; glycogen biosynthesis. Its function is as follows. Involved in the biosynthesis of ADP-glucose, a building block required for the elongation reactions to produce glycogen. Catalyzes the reaction between ATP and alpha-D-glucose 1-phosphate (G1P) to produce pyrophosphate and ADP-Glc. This is Glucose-1-phosphate adenylyltransferase from Haemophilus influenzae (strain 86-028NP).